Here is an 84-residue protein sequence, read N- to C-terminus: Cytochrome b559 subunit alpha (84 aa).

A helical membrane pass occupies residues 22–36; it reads VIHSITIPSLFVAGW. Histidine 24 provides a ligand contact to heme.

It belongs to the PsbE/PsbF family. Heterodimer of an alpha subunit and a beta subunit. PSII is composed of 1 copy each of membrane proteins PsbA, PsbB, PsbC, PsbD, PsbE, PsbF, PsbH, PsbI, PsbJ, PsbK, PsbL, PsbM, PsbT, PsbX, PsbY, PsbZ, Psb30/Ycf12, at least 3 peripheral proteins of the oxygen-evolving complex and a large number of cofactors. It forms dimeric complexes. Heme b serves as cofactor.

The protein resides in the plastid. Its subcellular location is the chloroplast thylakoid membrane. This b-type cytochrome is tightly associated with the reaction center of photosystem II (PSII). PSII is a light-driven water:plastoquinone oxidoreductase that uses light energy to abstract electrons from H(2)O, generating O(2) and a proton gradient subsequently used for ATP formation. It consists of a core antenna complex that captures photons, and an electron transfer chain that converts photonic excitation into a charge separation. This is Cytochrome b559 subunit alpha from Gracilaria tenuistipitata var. liui (Red alga).